We begin with the raw amino-acid sequence, 895 residues long: Endochitinase 2 (895 aa).

A signal peptide spans 1-22; sequence MGLTNILAAFIAVSSLFIQSLA. Residues 29 to 340 form the GH18 domain; sequence SNLAVYWGQG…DIMKEVLLRC (312 aa). Residue asparagine 90 is glycosylated (N-linked (GlcNAc...) asparagine). Residue glutamate 175 is the Proton donor of the active site. The disordered stretch occupies residues 343-712; it reads DPPTSTVTST…APSSSTTEDR (370 aa). Residues 346-425 are compositionally biased toward low complexity; it reads TSTVTSTISA…ISTRSASTET (80 aa). Residues 426–478 are compositionally biased toward polar residues; it reads VTTRSQEPPSTTISTRPASTETVTTRSQEPPSSTISTRSASTETVTTRSQEPP. Low complexity predominate over residues 479 to 505; that stretch reads SSTISTRSASTETSTSSQDSPSTTIST. Over residues 506–543 the composition is skewed to polar residues; the sequence is KSAPTGTVTTRSQDLPSTTISTRSPETETETVTTKSQD. Positions 544 to 555 are enriched in low complexity; it reads SPSITLSTRSSS. Positions 556–577 are enriched in polar residues; sequence AETVSTRSQHSSSTTISTKSAP. The span at 578 to 589 shows a compositional bias: low complexity; that stretch reads TETGTTSEHSTS. Over residues 590–657 the composition is skewed to polar residues; it reads MPVSTRSAST…ISTELPSQTH (68 aa). 2 stretches are compositionally biased toward low complexity: residues 658–692 and 699–712; these read STTDSTPVSSSPTIPSGSTTIIPGTASDPVSAPTT and TLTLAPSSSTTEDR. The GPI-anchor amidated glycine moiety is linked to residue glycine 866. The propeptide at 867-895 is removed in mature form; sequence GAMTVRSMDVVAKALITAGAAVLGLFLGL.

It belongs to the glycosyl hydrolase 18 family. Chitinase class III subfamily.

The protein resides in the cell membrane. The catalysed reaction is Random endo-hydrolysis of N-acetyl-beta-D-glucosaminide (1-&gt;4)-beta-linkages in chitin and chitodextrins.. In terms of biological role, may be associated with endosporulation. This Coccidioides immitis (strain RS) (Valley fever fungus) protein is Endochitinase 2 (CTS2).